The chain runs to 127 residues: Fluoride-specific ion channel FluC (127 aa).

4 helical membrane-spanning segments follow: residues Leu4–Met24, Leu35–Phe55, Thr71–Leu91, and Val103–Ala123. The Na(+) site is built by Gly75 and Thr78.

Belongs to the fluoride channel Fluc/FEX (TC 1.A.43) family.

The protein localises to the cell inner membrane. The catalysed reaction is fluoride(in) = fluoride(out). Na(+) is not transported, but it plays an essential structural role and its presence is essential for fluoride channel function. Its function is as follows. Fluoride-specific ion channel. Important for reducing fluoride concentration in the cell, thus reducing its toxicity. In Escherichia fergusonii (strain ATCC 35469 / DSM 13698 / CCUG 18766 / IAM 14443 / JCM 21226 / LMG 7866 / NBRC 102419 / NCTC 12128 / CDC 0568-73), this protein is Fluoride-specific ion channel FluC.